We begin with the raw amino-acid sequence, 388 residues long: Succinate--CoA ligase [ADP-forming] subunit beta (388 aa).

Residues 9–244 form the ATP-grasp domain; it reads KALFAEYGLP…PSQDDAREAH (236 aa). ATP is bound by residues lysine 46, 53–55, glutamate 99, threonine 102, and glutamate 107; that span reads GRG. 2 residues coordinate Mg(2+): asparagine 199 and aspartate 213. Substrate is bound by residues asparagine 264 and 321–323; that span reads GIV.

It belongs to the succinate/malate CoA ligase beta subunit family. In terms of assembly, heterotetramer of two alpha and two beta subunits. Mg(2+) serves as cofactor.

The enzyme catalyses succinate + ATP + CoA = succinyl-CoA + ADP + phosphate. The catalysed reaction is GTP + succinate + CoA = succinyl-CoA + GDP + phosphate. It functions in the pathway carbohydrate metabolism; tricarboxylic acid cycle; succinate from succinyl-CoA (ligase route): step 1/1. Its function is as follows. Succinyl-CoA synthetase functions in the citric acid cycle (TCA), coupling the hydrolysis of succinyl-CoA to the synthesis of either ATP or GTP and thus represents the only step of substrate-level phosphorylation in the TCA. The beta subunit provides nucleotide specificity of the enzyme and binds the substrate succinate, while the binding sites for coenzyme A and phosphate are found in the alpha subunit. The sequence is that of Succinate--CoA ligase [ADP-forming] subunit beta from Shewanella pealeana (strain ATCC 700345 / ANG-SQ1).